Consider the following 292-residue polypeptide: MAEITAALVKELREKTDAPMMECKKALTEAEGDLARAEEILRVKLGNKASKAAARVTAEGLIGLYIAADGKQGAVIEVNCETDFVAKNTDFIDFINKLAELVATQNPADVAALSALPFGEGTVETTRTALVGKIGENISVRRFERIQTPNSLASYVHGGKIGVLVEFSGAEEVGKDLAMHIAATKPKALNADGVNAEDIAAERSVAEQKAAESGKPAEIVAKMVEGSVQKFLKEVTLLSQPFVKNDKQTIEQMLKEKGASITKFVLFVVGEGIEKKTADFASEVAAAAAGRA.

The tract at residues 82-85 (TDFV) is involved in Mg(2+) ion dislocation from EF-Tu.

It belongs to the EF-Ts family.

Its subcellular location is the cytoplasm. In terms of biological role, associates with the EF-Tu.GDP complex and induces the exchange of GDP to GTP. It remains bound to the aminoacyl-tRNA.EF-Tu.GTP complex up to the GTP hydrolysis stage on the ribosome. The sequence is that of Elongation factor Ts from Bordetella bronchiseptica (strain ATCC BAA-588 / NCTC 13252 / RB50) (Alcaligenes bronchisepticus).